Consider the following 127-residue polypeptide: Putative membrane protein insertion efficiency factor (127 aa).

The interval 71–106 (DPPPPPRLHRAAAARMPRQRDADPRDTTRCSSTGAE) is disordered. Residues 88 to 98 (RQRDADPRDTT) are compositionally biased toward basic and acidic residues.

This sequence belongs to the UPF0161 family.

It is found in the cell inner membrane. Could be involved in insertion of integral membrane proteins into the membrane. The chain is Putative membrane protein insertion efficiency factor from Sorangium cellulosum (strain So ce56) (Polyangium cellulosum (strain So ce56)).